Consider the following 291-residue polypeptide: Tryptophan synthase alpha chain (291 aa).

Active-site proton acceptor residues include E69 and D80.

Belongs to the TrpA family. As to quaternary structure, tetramer of two alpha and two beta chains.

The catalysed reaction is (1S,2R)-1-C-(indol-3-yl)glycerol 3-phosphate + L-serine = D-glyceraldehyde 3-phosphate + L-tryptophan + H2O. It functions in the pathway amino-acid biosynthesis; L-tryptophan biosynthesis; L-tryptophan from chorismate: step 5/5. In terms of biological role, the alpha subunit is responsible for the aldol cleavage of indoleglycerol phosphate to indole and glyceraldehyde 3-phosphate. The protein is Tryptophan synthase alpha chain of Bifidobacterium longum (strain NCC 2705).